The sequence spans 122 residues: Large ribosomal subunit protein uL14c (122 aa).

It belongs to the universal ribosomal protein uL14 family. Part of the 50S ribosomal subunit.

It is found in the plastid. The protein localises to the chloroplast. Binds to 23S rRNA. This Dioscorea elephantipes (Elephant's foot yam) protein is Large ribosomal subunit protein uL14c.